The chain runs to 198 residues: ATP-dependent Clp protease proteolytic subunit (198 aa).

S98 functions as the Nucleophile in the catalytic mechanism. The active site involves H123.

This sequence belongs to the peptidase S14 family. As to quaternary structure, fourteen ClpP subunits assemble into 2 heptameric rings which stack back to back to give a disk-like structure with a central cavity, resembling the structure of eukaryotic proteasomes.

Its subcellular location is the cytoplasm. It carries out the reaction Hydrolysis of proteins to small peptides in the presence of ATP and magnesium. alpha-casein is the usual test substrate. In the absence of ATP, only oligopeptides shorter than five residues are hydrolyzed (such as succinyl-Leu-Tyr-|-NHMec, and Leu-Tyr-Leu-|-Tyr-Trp, in which cleavage of the -Tyr-|-Leu- and -Tyr-|-Trp bonds also occurs).. In terms of biological role, cleaves peptides in various proteins in a process that requires ATP hydrolysis. Has a chymotrypsin-like activity. Plays a major role in the degradation of misfolded proteins. The polypeptide is ATP-dependent Clp protease proteolytic subunit (Ehrlichia ruminantium (strain Gardel)).